Consider the following 427-residue polypeptide: Gamma-glutamyl phosphate reductase (427 aa).

This sequence belongs to the gamma-glutamyl phosphate reductase family.

Its subcellular location is the cytoplasm. The catalysed reaction is L-glutamate 5-semialdehyde + phosphate + NADP(+) = L-glutamyl 5-phosphate + NADPH + H(+). It functions in the pathway amino-acid biosynthesis; L-proline biosynthesis; L-glutamate 5-semialdehyde from L-glutamate: step 2/2. Its function is as follows. Catalyzes the NADPH-dependent reduction of L-glutamate 5-phosphate into L-glutamate 5-semialdehyde and phosphate. The product spontaneously undergoes cyclization to form 1-pyrroline-5-carboxylate. The protein is Gamma-glutamyl phosphate reductase of Sinorhizobium medicae (strain WSM419) (Ensifer medicae).